Reading from the N-terminus, the 620-residue chain is Chaperone protein DnaK (620 aa).

The interval 579–620 (KAQKEASAGAEASEDASGPSSTGSASDDDVVDADYEVVDEDK) is disordered. Residues 583–603 (EASAGAEASEDASGPSSTGSA) are compositionally biased toward low complexity. Residues 604 to 620 (SDDDVVDADYEVVDEDK) are compositionally biased toward acidic residues.

The protein belongs to the heat shock protein 70 family.

Acts as a chaperone. The polypeptide is Chaperone protein DnaK (Methanococcoides burtonii (strain DSM 6242 / NBRC 107633 / OCM 468 / ACE-M)).